A 1182-amino-acid chain; its full sequence is Protein patched homolog 2 (1182 aa).

The Cytoplasmic segment spans residues 1–57 (MVRPLSLGELPPSYTPPARSSAPHILAGSLQAPLWLRAYFQGLLFSLGCRIQKHCGK). Residues 58–78 (VLFLGLVAFGALALGLRVAVI) traverse the membrane as a helical segment. Over 79–394 (ETDLEQLWVE…DILRAFSEVS (316 aa)) the chain is Extracellular. N-linked (GlcNAc...) asparagine glycosylation is present at N370. Residues 394–552 (STTRVVGGYL…MLVFPAILSL (159 aa)) form the SSD domain. A helical membrane pass occupies residues 395–414 (TTRVVGGYLLMLAYACVTML). Residues 415-428 (RWDCAQSQGAVGLA) lie on the Cytoplasmic side of the membrane. A helical transmembrane segment spans residues 429–449 (GVLLVALAVASGLGLCALLGI). The Extracellular segment spans residues 450–457 (TFNAATTQ). Residues 458-478 (VLPFLALGIGVDDIFLLAHAF) form a helical membrane-spanning segment. Residues 479–501 (TKAPPDTPLPERMGECLRSTGTS) lie on the Cytoplasmic side of the membrane. Residues 502 to 522 (VALTSVNNMVAFFMAALVPIP) traverse the membrane as a helical segment. The Extracellular portion of the chain corresponds to 523–531 (ALRAFSLQA). Residues 532–552 (AIVVGCNFAAVMLVFPAILSL) traverse the membrane as a helical segment. Residues 553-686 (DLRRRHRQRL…APLLLQTRAK (134 aa)) lie on the Cytoplasmic side of the membrane. Residues 687–707 (ALVLLFFGALLGLSLYGATLV) form a helical membrane-spanning segment. Residues 708–963 (QDGLALTDVV…WEQYLGLRRC (256 aa)) lie on the Extracellular side of the membrane. Residue N812 is glycosylated (N-linked (GlcNAc...) asparagine). A helical transmembrane segment spans residues 964–984 (FLLAVCILLVCTFLVCALLLL). The Cytoplasmic segment spans residues 985–991 (SPWTAGL). The chain crosses the membrane as a helical span at residues 992–1012 (IVLVLAMMTVELFGIMGFLGI). Residue K1013 is a topological domain, extracellular. The chain crosses the membrane as a helical span at residues 1014-1034 (LSAIPVVILVASIGIGVEFTV). Over 1035–1064 (HVALGFLTSHGSRNLRAASALEQTFAPVTD) the chain is Cytoplasmic. Residues 1065 to 1085 (GAVSTLLGLLMLAGSNFDFII) traverse the membrane as a helical segment. Residue R1086 is a topological domain, extracellular. A helical transmembrane segment spans residues 1087–1107 (YFFVVLTVLTLLGLLHGLLLL). Over 1108–1182 (PVLLSILGPP…YVHPASEEPT (75 aa)) the chain is Cytoplasmic.

The protein belongs to the patched family. Expressed in epithelial cells of the developing hair, tooth and whisker.

Its subcellular location is the membrane. Its function is as follows. Plays a role in the control of cellular growth. May have a role in epidermal development. May act as a receptor for Sonic hedgehog (SHH). In Mus musculus (Mouse), this protein is Protein patched homolog 2 (Ptch2).